Reading from the N-terminus, the 20-residue chain is Bulb protein (20 aa).

Positions 1–20 (APDVHTRXTQNGLPPGXLPS) are disordered.

This is Bulb protein from Narcissus pseudonarcissus (Daffodil).